We begin with the raw amino-acid sequence, 281 residues long: Pantothenate synthetase (281 aa).

ATP is bound at residue 31-38 (MGALHDGH). His-38 (proton donor) is an active-site residue. Gln-62 provides a ligand contact to (R)-pantoate. Residue Gln-62 coordinates beta-alanine. 148 to 151 (GQKD) is an ATP binding site. Gln-154 contributes to the (R)-pantoate binding site. Residues Val-177 and 185 to 188 (LSSR) contribute to the ATP site.

This sequence belongs to the pantothenate synthetase family. In terms of assembly, homodimer.

The protein resides in the cytoplasm. It catalyses the reaction (R)-pantoate + beta-alanine + ATP = (R)-pantothenate + AMP + diphosphate + H(+). It functions in the pathway cofactor biosynthesis; (R)-pantothenate biosynthesis; (R)-pantothenate from (R)-pantoate and beta-alanine: step 1/1. Its function is as follows. Catalyzes the condensation of pantoate with beta-alanine in an ATP-dependent reaction via a pantoyl-adenylate intermediate. In Dinoroseobacter shibae (strain DSM 16493 / NCIMB 14021 / DFL 12), this protein is Pantothenate synthetase.